Here is a 352-residue protein sequence, read N- to C-terminus: MGRPEFNRGGGGGGFRGGRGGDRGGSRGGFGGGGRGGYGGGDRGSFGGGDRGGFRGGRGGGDRGGFRGGRGGGDRGGFGGRGSPRGGFGGRGSPRGGRGSPRGGRGGAGGMRGGKTVVVEPHRLGGVFIVKGKEDALATKNMVVGESVYGEKRVSVDDGAGSIEYRVWNPFRSKLAASIMGGLENTHIKPGTKLLYLGAASGTTVSHCSDVVGPEGIVYAVEFSHRSGRDLLGVAKKRPNVVPIVEDARHPHKYRMLVGMVDVIFSDVAQPDQARIVALNAQNFLRNGGHAVISIKANCIDSTAEPEAVFAGEVNKLKEEKFKPLEQVTLEPYERDHAVVVAVYRPVKGKKV.

The interval 1-115 is disordered; it reads MGRPEFNRGG…GGAGGMRGGK (115 aa). Residues Arg8, Arg16, Arg19, Arg23, Arg27, Arg35, Arg43, Arg51, Arg55, Arg58, Arg63, Arg67, Arg70, Arg75, Arg81, Arg85, Arg91, Arg95, Arg98, Arg102, Arg105, and Arg112 each carry the asymmetric dimethylarginine modification. Residues 8–18 show a composition bias toward gly residues; the sequence is RGGGGGGFRGG. Positions 26-59 are enriched in gly residues; that stretch reads SRGGFGGGGRGGYGGGDRGSFGGGDRGGFRGGRG. Residues 66–113 are compositionally biased toward gly residues; sequence FRGGRGGGDRGGFGGRGSPRGGFGGRGSPRGGRGSPRGGRGGAGGMRG. S-adenosyl-L-methionine contacts are provided by residues 203–204, 222–223, 247–248, and 267–270; these read TT, EF, DA, and DVAQ.

Belongs to the methyltransferase superfamily. Fibrillarin family. Component of box C/D small nucleolar ribonucleoprotein (snoRNP) particles. It is associated with the U3, U8 and U13 small nuclear RNAs. By homology to other fibrillarins, some or all of the N-terminal domain arginines are modified to asymmetric dimethylarginine (DMA).

It localises to the nucleus. Its subcellular location is the nucleolus. It is found in the nucleoplasm. It carries out the reaction L-glutaminyl-[histone H2A] + S-adenosyl-L-methionine = N(5)-methyl-L-glutaminyl-[histone H2A] + S-adenosyl-L-homocysteine + H(+). Its function is as follows. S-adenosyl-L-methionine-dependent methyltransferase that has the ability to methylate both RNAs and proteins. Involved in pre-rRNA processing. Utilizes the methyl donor S-adenosyl-L-methionine to catalyze the site-specific 2'-hydroxyl methylation of ribose moieties in pre-ribosomal RNA. Site specificity is provided by a guide RNA that base pairs with the substrate. Methylation occurs at a characteristic distance from the sequence involved in base pairing with the guide RNA. Also acts as a protein methyltransferase by mediating methylation of 'Gln-105' of histone H2A (H2AQ105me), a modification that impairs binding of the FACT complex and is specifically present at 35S ribosomal DNA locus. Plays a role in modulation of nucleolus size most likely through regulating the ribosomal RNA (rRNA) pool. The polypeptide is rRNA 2'-O-methyltransferase fibrillarin (Caenorhabditis elegans).